A 372-amino-acid polypeptide reads, in one-letter code: UDP-2-acetamido-2,6-beta-L-arabino-hexul-4-ose reductase (372 aa).

NAD(+) contacts are provided by residues 7 to 30 (GANGFVGRNLCAHLAERGGIEVVP), leucine 53, tyrosine 103, and lysine 107. Tyrosine 103 acts as the Proton acceptor in catalysis. Substrate contacts are provided by residues asparagine 132 and 279–282 (HPGV).

It belongs to the NAD(P)-dependent epimerase/dehydratase family. Homodimer.

The enzyme catalyses UDP-2-acetamido-2,6-dideoxy-beta-L-arabino-hex-4-ulose + NADH + H(+) = UDP-2-acetamido-2,6-dideoxy-beta-L-talose + NAD(+). It carries out the reaction UDP-2-acetamido-2,6-dideoxy-beta-L-arabino-hex-4-ulose + NADPH + H(+) = UDP-2-acetamido-2,6-dideoxy-beta-L-talose + NADP(+). Its pathway is bacterial outer membrane biogenesis; LPS O-antigen biosynthesis. Bifunctional enzyme that mediates C-3 epimerization of the second intermediate followed by reduction at C-4 during serogroup O11 O-antigen biosynthesis, thus catalyzing the conversion of UDP-N-acetyl-D-glucosamine to precursors for the biosynthesis of O antigen. The sequence is that of UDP-2-acetamido-2,6-beta-L-arabino-hexul-4-ose reductase from Pseudomonas aeruginosa (strain ATCC 29260 / BCRC 12902 / CIP 102967 / NCIMB 11965 / PA103).